The sequence spans 515 residues: Iroquois-class homeodomain protein IRX-4 (515 aa).

Residues 144–205 (GTRRKNATRE…NARRRLKKEN (62 aa)) constitute a DNA-binding region (homeobox; TALE-type). Disordered stretches follow at residues 205-258 (NKMT…ELEL), 278-307 (TPFQ…STTL), and 398-425 (GPTG…RHQD). Basic and acidic residues predominate over residues 214 to 223 (KCADEKRPYG). The span at 224–236 (EGEEEEAGEEESR) shows a compositional bias: acidic residues. The span at 237–257 (EEPLKSAKSEGHAGKDDKELE) shows a compositional bias: basic and acidic residues. Over residues 399–419 (PTGVSATTPASSPAVTAPSGA) the composition is skewed to low complexity.

This sequence belongs to the TALE/IRO homeobox family. As to quaternary structure, interacts with the vitamin D receptor VDR but doesn't affect its transactivation activity. In terms of tissue distribution, expressed in the developing central nervous system, skin, and vibrissae, but predominantly expressed in the cardiac ventricles of the developing heart. Not expressed in the developing metanephric kidney or adult kidney.

It localises to the nucleus. Its function is as follows. Likely to be an important mediator of ventricular differentiation during cardiac development. The polypeptide is Iroquois-class homeodomain protein IRX-4 (Irx4) (Mus musculus (Mouse)).